The primary structure comprises 312 residues: Ribosomal large subunit pseudouridine synthase D (312 aa).

One can recognise an S4 RNA-binding domain in the interval 18-87 (QRLDLVLSKL…IPENIFLDIV (70 aa)). Residue Asp139 is part of the active site.

Belongs to the pseudouridine synthase RluA family.

It is found in the cytoplasm. The catalysed reaction is uridine(1911/1915/1917) in 23S rRNA = pseudouridine(1911/1915/1917) in 23S rRNA. In terms of biological role, responsible for synthesis of pseudouridine from uracil at positions 1911, 1915 and 1917 in 23S ribosomal RNA. The chain is Ribosomal large subunit pseudouridine synthase D (rluD) from Buchnera aphidicola subsp. Acyrthosiphon pisum (strain APS) (Acyrthosiphon pisum symbiotic bacterium).